The following is a 529-amino-acid chain: UDP-glycosyltransferase (529 aa).

Residues N70 and N420 are each glycosylated (N-linked (GlcNAc...) asparagine). A helical transmembrane segment spans residues 504-524 (LDLYLVYIALFAVPVGAVRWI).

Belongs to the glycosyltransferase 28 family.

It is found in the membrane. It carries out the reaction stromemycin aglycone + UDP-alpha-D-glucose = stromemycin + UDP + H(+). Its pathway is mycotoxin biosynthesis. Functionally, UDP-glycosyltransferase; part of the gene cluster that mediates the biosynthesis of stromemycin, a depside C-glucoside with two unsaturated C9 side chains belonging to aromatic polyketide glycosides. Acts as the tailoring enzyme responsible for 3-C-glucosylation of bininalkenylresorcylic acid to yield stromemycin. This is UDP-glycosyltransferase from Talaromyces amestolkiae.